Consider the following 568-residue polypeptide: Probable pectinesterase/pectinesterase inhibitor 23 (568 aa).

The signal sequence occupies residues 1–33; that stretch reads MGSDGDKKKKFIVAGSVSGFLVIMVVSVAVVTS. Residues 45-198 form a pectinesterase inhibitor 23 region; that stretch reads RKTTKAVQAV…RELSSNSLAM (154 aa). N-linked (GlcNAc...) asparagine glycans are attached at residues Asn94, Asn210, and Asn316. The tract at residues 251 to 548 is pectinesterase 23; sequence PGPVKANAVV…PQDALLYTGD (298 aa). The substrate site is built by Thr333 and Gln363. The active-site Proton donor; for pectinesterase activity is Asp386. Residues Cys400 and Cys420 are joined by a disulfide bond. Asp407 acts as the Nucleophile; for pectinesterase activity in catalysis. Substrate-binding residues include Arg475 and Trp477.

The protein in the N-terminal section; belongs to the PMEI family. In the C-terminal section; belongs to the pectinesterase family. In terms of tissue distribution, expressed in mature pollen grains in the anthers and on the stigma. Found in pollen tubes within the style.

The protein localises to the secreted. Its subcellular location is the cell wall. The catalysed reaction is [(1-&gt;4)-alpha-D-galacturonosyl methyl ester](n) + n H2O = [(1-&gt;4)-alpha-D-galacturonosyl](n) + n methanol + n H(+). The protein operates within glycan metabolism; pectin degradation; 2-dehydro-3-deoxy-D-gluconate from pectin: step 1/5. Acts in the modification of cell walls via demethylesterification of cell wall pectin. The protein is Probable pectinesterase/pectinesterase inhibitor 23 (PME23) of Arabidopsis thaliana (Mouse-ear cress).